A 115-amino-acid chain; its full sequence is Putative HNH nuclease YajD (115 aa).

The HNH domain maps to 27-75 (CGRCSREFVYSNLRELTVHHIDHDHTNNPEDGSNWELLCLYCHDHEHSK).

This sequence belongs to the HNH nuclease family.

The protein is Putative HNH nuclease YajD (yajD) of Salmonella typhi.